Here is a 151-residue protein sequence, read N- to C-terminus: Putative pre-16S rRNA nuclease (151 aa).

Belongs to the YqgF nuclease family.

It localises to the cytoplasm. Could be a nuclease involved in processing of the 5'-end of pre-16S rRNA. In Neisseria gonorrhoeae (strain ATCC 700825 / FA 1090), this protein is Putative pre-16S rRNA nuclease.